Here is a 991-residue protein sequence, read N- to C-terminus: Antigenic heat-stable 120 kDa protein (991 aa).

Disordered stretches follow at residues 1–37 (DTSE…TPAL), 54–73 (TPSM…TSDP), and 348–384 (GQSK…TNQP). Residues 12-29 (EYTEEQKQTEEQEQKEFL) show a composition bias toward basic and acidic residues. Residues 348–373 (GQSKEQPLITPQQTTSSSVEPPQYKQ) are compositionally biased toward polar residues.

Its subcellular location is the cytoplasm. This Rickettsia sibirica protein is Antigenic heat-stable 120 kDa protein (sca4).